Reading from the N-terminus, the 160-residue chain is SsrA-binding protein (160 aa).

This sequence belongs to the SmpB family.

It localises to the cytoplasm. Its function is as follows. Required for rescue of stalled ribosomes mediated by trans-translation. Binds to transfer-messenger RNA (tmRNA), required for stable association of tmRNA with ribosomes. tmRNA and SmpB together mimic tRNA shape, replacing the anticodon stem-loop with SmpB. tmRNA is encoded by the ssrA gene; the 2 termini fold to resemble tRNA(Ala) and it encodes a 'tag peptide', a short internal open reading frame. During trans-translation Ala-aminoacylated tmRNA acts like a tRNA, entering the A-site of stalled ribosomes, displacing the stalled mRNA. The ribosome then switches to translate the ORF on the tmRNA; the nascent peptide is terminated with the 'tag peptide' encoded by the tmRNA and targeted for degradation. The ribosome is freed to recommence translation, which seems to be the essential function of trans-translation. This is SsrA-binding protein from Pectobacterium atrosepticum (strain SCRI 1043 / ATCC BAA-672) (Erwinia carotovora subsp. atroseptica).